The primary structure comprises 168 residues: G/U mismatch-specific DNA glycosylase (168 aa).

The protein belongs to the uracil-DNA glycosylase (UDG) superfamily. TDG/mug family. Binds DNA as a monomer.

It localises to the cytoplasm. It carries out the reaction Specifically hydrolyzes mismatched double-stranded DNA and polynucleotides, releasing free uracil.. Excises ethenocytosine and uracil, which can arise by alkylation or deamination of cytosine, respectively, from the corresponding mispairs with guanine in ds-DNA. It is capable of hydrolyzing the carbon-nitrogen bond between the sugar-phosphate backbone of the DNA and the mispaired base. The complementary strand guanine functions in substrate recognition. Required for DNA damage lesion repair in stationary-phase cells. This is G/U mismatch-specific DNA glycosylase from Escherichia coli O9:H4 (strain HS).